The chain runs to 288 residues: UPF0761 membrane protein HSM_1104 (288 aa).

6 consecutive transmembrane segments (helical) span residues 36-56 (TLAL…FPVF), 92-112 (QMSA…IHSI), 127-147 (PAIF…IVIA), 176-196 (LLSL…YMVV), 200-220 (KVSI…FTLG), and 240-260 (AMAT…AVLL).

Belongs to the UPF0761 family.

Its subcellular location is the cell inner membrane. This Histophilus somni (strain 2336) (Haemophilus somnus) protein is UPF0761 membrane protein HSM_1104.